We begin with the raw amino-acid sequence, 430 residues long: MGQPEGLERFDSPGKGRGLKATRSFALGELLFSCPAYTYVLTDNERGNHCDFCFTRKEGLSKCGKCKQAFYCNVDCQKGDWPMHKLECSSMCSSGQNWCPSETVRLTARILAKQKTQTERTASERFMSVKEFESHLSKLDNEKKELIENDISALHRFYSKNVHNCDNAALEFLFAQVNCNGFTIEDEELSHLGSAIFPDVALMNHSCCPNVIVTYKGTVAEVRAVQEIHAGEEVFTSYIDLLYPTEDRNDRLKDSYFFSCDCRECSTKQKDPAKLELRKLSDPPSPQTVRDMITYARNVVEEFRRAKHYKTPSELLEICELSLDKMGSVFVDSNVYMLHMMYQAMGVCLYMQDWEGALKYGEKIIKPYSKHYPAYSLNVASMWLKLGRLYMGLEKNTIGTKALKKALAIMEIAHGPDHYYIAEIKKELEL.

The 235-residue stretch at 5–239 (EGLERFDSPG…AGEEVFTSYI (235 aa)) folds into the SET domain. 15 to 17 (KGR) serves as a coordination point for S-adenosyl-L-methionine. Zn(2+)-binding residues include Cys-50, Cys-53, Cys-63, Cys-66, Cys-72, Cys-76, His-84, and Cys-88. An MYND-type zinc finger spans residues 50–88 (CDFCFTRKEGLSKCGKCKQAFYCNVDCQKGDWPMHKLEC). S-adenosyl-L-methionine contacts are provided by residues His-135, 204 to 205 (NH), and 256 to 258 (YFF).

Belongs to the class V-like SAM-binding methyltransferase superfamily.

It localises to the cytoplasm. The protein localises to the cytosol. The protein resides in the nucleus. It catalyses the reaction L-lysyl(4)-[histone H3] + 3 S-adenosyl-L-methionine = N(6),N(6),N(6)-trimethyl-L-lysyl(4)-[histone H3] + 3 S-adenosyl-L-homocysteine + 3 H(+). It carries out the reaction L-lysyl-[protein] + S-adenosyl-L-methionine = N(6)-methyl-L-lysyl-[protein] + S-adenosyl-L-homocysteine + H(+). Protein-lysine N-methyltransferase that methylates both histones and non-histone proteins, including p53/TP53 and RB1. Specifically trimethylates histone H3 'Lys-4' (H3K4me3) in vivo. The activity requires interaction with HSP90alpha. Shows even higher methyltransferase activity on p53/TP53. Monomethylates 'Lys-370' of p53/TP53, leading to decreased DNA-binding activity and subsequent transcriptional regulation activity of p53/TP53. Monomethylates RB1 at 'Lys-860'. This is N-lysine methyltransferase SMYD2-B (smyd2-b) from Xenopus laevis (African clawed frog).